Here is a 578-residue protein sequence, read N- to C-terminus: Arginine--tRNA ligase (578 aa).

Residues 122-132 (PNVAKEMHVGH) carry the 'HIGH' region motif.

The protein belongs to the class-I aminoacyl-tRNA synthetase family. As to quaternary structure, monomer.

The protein resides in the cytoplasm. It catalyses the reaction tRNA(Arg) + L-arginine + ATP = L-arginyl-tRNA(Arg) + AMP + diphosphate. This Shigella sonnei (strain Ss046) protein is Arginine--tRNA ligase.